The primary structure comprises 378 residues: UPF0754 membrane protein BCE_0952 (378 aa).

A run of 2 helical transmembrane segments spans residues 1–21 (MNIWLSMLTTTGLGAIIGGFT) and 357–377 (YLGALLGGMIGIVQGLLLLFL).

Belongs to the UPF0754 family.

Its subcellular location is the cell membrane. This Bacillus cereus (strain ATCC 10987 / NRS 248) protein is UPF0754 membrane protein BCE_0952.